Reading from the N-terminus, the 279-residue chain is 3-methyl-2-oxobutanoate hydroxymethyltransferase (279 aa).

D44 and D83 together coordinate Mg(2+). Residues 44–45 (DS), D83, and K113 each bind 3-methyl-2-oxobutanoate. E115 provides a ligand contact to Mg(2+). The Proton acceptor role is filled by E182.

Belongs to the PanB family. Homodecamer; pentamer of dimers. Mg(2+) is required as a cofactor.

Its subcellular location is the cytoplasm. The enzyme catalyses 3-methyl-2-oxobutanoate + (6R)-5,10-methylene-5,6,7,8-tetrahydrofolate + H2O = 2-dehydropantoate + (6S)-5,6,7,8-tetrahydrofolate. It functions in the pathway cofactor biosynthesis; (R)-pantothenate biosynthesis; (R)-pantoate from 3-methyl-2-oxobutanoate: step 1/2. Catalyzes the reversible reaction in which hydroxymethyl group from 5,10-methylenetetrahydrofolate is transferred onto alpha-ketoisovalerate to form ketopantoate. This chain is 3-methyl-2-oxobutanoate hydroxymethyltransferase, found in Dehalococcoides mccartyi (strain CBDB1).